The sequence spans 534 residues: Calcium uptake protein 1 homolog, mitochondrial (534 aa).

A mitochondrion-targeting transit peptide spans 1–32; that stretch reads MLHCSFLRVIPIKNASKRLIIVRSLTSAPAKT. Residues 131-150 form a disordered region; sequence PEASQKEEVTESNGEVEEVK. EF-hand domains follow at residues 271 to 306, 338 to 359, and 466 to 501; these read TSHADFALAFKIFDVDGNGALDKEEFTKVQQLIMSQ, KDGKGSLSSEKFIEFQERLQHD, and LSDHVVDVVITLFDDNLDGKLSHEEMVAVMRRRMRR. Positions 284, 286, 288, and 295 each coordinate Ca(2+).

Belongs to the MICU1 family. MICU1 subfamily. As to expression, expressed at low levels in PLM touch receptor neurons, germ cells, epidermis, and muscles.

It is found in the mitochondrion intermembrane space. The protein resides in the mitochondrion inner membrane. Its function is as follows. Calcium sensor of the mitochondrial calcium uniporter (mcu-1) channel, which senses calcium level via its EF-hand domains. At low calcium levels, micu-1 occludes the pore of the mcu-1 channel, preventing mitochondrial calcium uptake. At higher calcium levels, calcium-binding to micu-1 induces a conformational change that weakens mcu-1-micu-1 interactions and moves micu-1 away from the pore, allowing calcium permeation through the mcu-1 channel. Also required to protect against manganese toxicity by preventing manganese uptake by mcu-1. Modulates the activity of the mitochondrial calcium uniporter protein mcu-1 depending on the level of intracellular calcium in PLM touch receptor neurons following axonal injury. This is Calcium uptake protein 1 homolog, mitochondrial from Caenorhabditis elegans.